Reading from the N-terminus, the 551-residue chain is Membrane protein insertase YidC (551 aa).

The helical transmembrane segment at 3–23 (ANHIRILLLVTIAIMFISLMG) threads the bilayer. Positions 33 to 55 (NTKQQTSATQNNSHYDNADSSTN) are disordered. 3 helical membrane-spanning segments follow: residues 361 to 381 (LVGN…LIFY), 431 to 451 (LSGC…YWVL), and 504 to 524 (VMMF…SGLV).

Belongs to the OXA1/ALB3/YidC family. Type 1 subfamily. Interacts with the Sec translocase complex via SecD. Specifically interacts with transmembrane segments of nascent integral membrane proteins during membrane integration.

The protein resides in the cell inner membrane. Its function is as follows. Required for the insertion and/or proper folding and/or complex formation of integral membrane proteins into the membrane. Involved in integration of membrane proteins that insert both dependently and independently of the Sec translocase complex, as well as at least some lipoproteins. Aids folding of multispanning membrane proteins. The polypeptide is Membrane protein insertase YidC (Francisella tularensis subsp. holarctica (strain OSU18)).